Consider the following 450-residue polypeptide: Adenylosuccinate lyase (450 aa).

Residues 9–10, 75–77, and 101–102 contribute to the N(6)-(1,2-dicarboxyethyl)-AMP site; these read RY, HHD, and TS. H149 (proton donor/acceptor) is an active-site residue. Q223 provides a ligand contact to N(6)-(1,2-dicarboxyethyl)-AMP. The active-site Proton donor/acceptor is S273. N(6)-(1,2-dicarboxyethyl)-AMP contacts are provided by residues S274, 279-281, and 318-322; these read KRN and SVERV.

This sequence belongs to the lyase 1 family. Adenylosuccinate lyase subfamily. Homotetramer. Residues from neighboring subunits contribute catalytic and substrate-binding residues to each active site.

It catalyses the reaction N(6)-(1,2-dicarboxyethyl)-AMP = fumarate + AMP. The catalysed reaction is (2S)-2-[5-amino-1-(5-phospho-beta-D-ribosyl)imidazole-4-carboxamido]succinate = 5-amino-1-(5-phospho-beta-D-ribosyl)imidazole-4-carboxamide + fumarate. It participates in purine metabolism; AMP biosynthesis via de novo pathway; AMP from IMP: step 2/2. It functions in the pathway purine metabolism; IMP biosynthesis via de novo pathway; 5-amino-1-(5-phospho-D-ribosyl)imidazole-4-carboxamide from 5-amino-1-(5-phospho-D-ribosyl)imidazole-4-carboxylate: step 2/2. Functionally, catalyzes two reactions in de novo purine nucleotide biosynthesis. Catalyzes the breakdown of 5-aminoimidazole- (N-succinylocarboxamide) ribotide (SAICAR or 2-[5-amino-1-(5-phospho-beta-D-ribosyl)imidazole-4-carboxamido]succinate) to 5-aminoimidazole-4-carboxamide ribotide (AICAR or 5-amino-1-(5-phospho-beta-D-ribosyl)imidazole-4-carboxamide) and fumarate, and of adenylosuccinate (ADS or N(6)-(1,2-dicarboxyethyl)-AMP) to adenosine monophosphate (AMP) and fumarate. This Pyrococcus horikoshii (strain ATCC 700860 / DSM 12428 / JCM 9974 / NBRC 100139 / OT-3) protein is Adenylosuccinate lyase (purB).